An 861-amino-acid polypeptide reads, in one-letter code: Extra-large guanine nucleotide-binding protein 2 (861 aa).

Disordered stretches follow at residues 1–32 and 121–168; these read MAAVIRKLLPFPSPNPKRDNRESDDDDETSSG and VSGS…DDRV. A compositionally biased stretch (basic and acidic residues) spans 131 to 143; it reads KRLDVPEEVKSPA. The segment covering 146–156 has biased composition (low complexity); the sequence is RLSPSSPLSAS. Residues 157-168 show a composition bias toward basic and acidic residues; it reads AREEDHLDDDRV. The short motif at 204–211 is the Nuclear localization signal element; it reads RAERKGKR. The segment at 214–257 adopts an RING-type; degenerate zinc-finger fold; it reads CYRCQLGNRFTEKEVCIVCDAKYCFNCVRRAMGAMPEGRKCQAC. Positions 461–853 constitute a G-alpha domain; it reads MLNKLLLIGS…TSMFQEMSTT (393 aa). Residues 464 to 477 form a G1 motif region; that stretch reads KLLLIGSEKGGATT. 469 to 477 contacts GTP; it reads GSEKGGATT. Thr-476 contacts Ca(2+). Residues 523-545 are disordered; that stretch reads EMSNDQSSGNVGDETSAKPGNSI. 624 to 632 provides a ligand contact to GTP; sequence DILQAEGLS. Positions 624-632 are G2 motif; it reads DILQAEGLS. Ser-632 contributes to the Ca(2+) binding site. The interval 665–674 is G3 motif; sequence YQLIRLNPRS. The tract at residues 737–744 is G4 motif; that stretch reads LLVLTKFD. 741 to 744 provides a ligand contact to GTP; that stretch reads TKFD. Residues 818 to 823 are G5 motif; it reads QVSLES.

The protein belongs to the G-alpha family. XLG subfamily. In terms of assembly, interacts with GB1. Component of a G-protein complex at least composed of XLG2 and GB1. Interacts with RTV1. Ca(2+) serves as cofactor. In terms of tissue distribution, ubiquitous. Strongly expressed in vascular tissues, root and shoot meristems and lateral root primordia.

It is found in the nucleus. In terms of biological role, guanine nucleotide-binding proteins (G proteins) are involved as modulators or transducers in various transmembrane signaling systems. Binds GTP with specificity. Plays a role in the root morphogenesis by regulation of the cell proliferation. Acts as a positive regulator in resistance to pathogen that triggers the salicylic acid (SA) pathway. Promotes the DNA binding activity of RTV1 specifically to promoter regions of FT and SOC1 in vivo leading to the activation of floral integrator genes. This chain is Extra-large guanine nucleotide-binding protein 2 (XLG2), found in Arabidopsis thaliana (Mouse-ear cress).